Reading from the N-terminus, the 1247-residue chain is Probable phosphorylase b kinase regulatory subunit alpha (1247 aa).

The interval 853–883 (LKGLYEKACQQKLWGLVRHTAGMLGKRVEDL) is calmodulin-binding. S1030 and S1033 each carry phosphoserine. Residues 1052–1089 (DRQGQWLRRRRLDGALNRVPRDFYSRVWTVLEKCQGLA) form a calmodulin-binding region. A lipid anchor (S-farnesyl cysteine) is attached at C1244.

This sequence belongs to the phosphorylase b kinase regulatory chain family. In terms of processing, although the final Cys may be farnesylated, the terminal tripeptide is probably not removed, and the C-terminus is not methylated.

The protein localises to the cell membrane. It functions in the pathway glycan biosynthesis; glycogen metabolism. Functionally, phosphorylase b kinase catalyzes the phosphorylation of serine in certain substrates, including troponin I. The alpha chain may bind calmodulin. The protein is Probable phosphorylase b kinase regulatory subunit alpha of Drosophila melanogaster (Fruit fly).